Reading from the N-terminus, the 235-residue chain is Protein FAM3B (235 aa).

Positions methionine 1–alanine 29 are cleaved as a signal peptide. 2 cysteine pairs are disulfide-bonded: cysteine 63-cysteine 91 and cysteine 69-cysteine 229. Residues aspartate 72–glutamate 233 enclose the GG-type lectin domain. Residues asparagine 120 and asparagine 208 are each glycosylated (N-linked (GlcNAc...) asparagine).

Belongs to the FAM3 family. In terms of processing, 2 N-termini have been observed in the mature protein: the first at Glu-30, resulting from signal peptide cleavage, the second at Ser-46. Post-translationally, O-glycosylated. In terms of tissue distribution, highly expressed in the pancreas. Also found in the colon, kidney, prostate, small intestine and testis.

The protein resides in the secreted. Induces apoptosis of alpha and beta cells in a dose- and time-dependent manner. The chain is Protein FAM3B (FAM3B) from Homo sapiens (Human).